The following is a 626-amino-acid chain: Threonine--tRNA ligase (626 aa).

An editing domain region spans residues 1-145; sequence MRMLLIHSDY…SRTIVPEKAV (145 aa). Residues 207–506 are catalytic; the sequence is PHVRLMLEQE…QEKGIKPMYP (300 aa). Cys-299, His-351, and His-475 together coordinate Zn(2+).

The protein belongs to the class-II aminoacyl-tRNA synthetase family. In terms of assembly, homodimer. Requires Zn(2+) as cofactor.

It is found in the cytoplasm. The catalysed reaction is tRNA(Thr) + L-threonine + ATP = L-threonyl-tRNA(Thr) + AMP + diphosphate + H(+). Its function is as follows. Catalyzes the attachment of threonine to tRNA(Thr) in a two-step reaction: L-threonine is first activated by ATP to form Thr-AMP and then transferred to the acceptor end of tRNA(Thr). Also edits incorrectly charged L-seryl-tRNA(Thr). The protein is Threonine--tRNA ligase of Thermococcus kodakarensis (strain ATCC BAA-918 / JCM 12380 / KOD1) (Pyrococcus kodakaraensis (strain KOD1)).